Reading from the N-terminus, the 428-residue chain is uncharacterized protein (428 aa).

3 disordered regions span residues 1–25 (MRDN…PTRT), 157–219 (DTAK…TEQV), and 247–271 (DFGT…PWRP). Over residues 12-22 (GSESQQTTYDP) the composition is skewed to polar residues. Residues 157–171 (DTAKSNEKLQGDESK) show a composition bias toward basic and acidic residues. Residues 172 to 186 (SSNGSSSTSTTTQRG) show a composition bias toward low complexity. Positions 206–217 (GSQGNSGEQGTE) are enriched in polar residues.

It belongs to the adhesin P1 family.

This is an uncharacterized protein from Mycoplasma pneumoniae (strain ATCC 29342 / M129 / Subtype 1) (Mycoplasmoides pneumoniae).